Consider the following 699-residue polypeptide: 1,4-alpha-glucan-branching enzyme (699 aa).

Residues 59-60 (NE) and 88-90 (WAP) contribute to the substrate site. (1,4-alpha-D-glucosyl)n is bound at residue W104. 115-118 (DYGK) contacts substrate. K140 contacts (1,4-alpha-D-glucosyl)n. Y170 is subject to Phosphotyrosine. 330–333 (EVLR) is a substrate binding site. The active-site Nucleophile is the D354. E409 acts as the Proton donor in catalysis.

The protein belongs to the glycosyl hydrolase 13 family. GlgB subfamily. In terms of assembly, monomer.

The enzyme catalyses Transfers a segment of a (1-&gt;4)-alpha-D-glucan chain to a primary hydroxy group in a similar glucan chain.. The protein operates within glycan biosynthesis; glycogen biosynthesis. Glycogen-branching enzyme participates in the glycogen biosynthetic process along with glycogenin and glycogen synthase. Generates alpha-1,6-glucosidic branches from alpha-1,4-linked glucose chains, to increase solubility of the glycogen polymer. The protein is 1,4-alpha-glucan-branching enzyme (GBE1) of Equus caballus (Horse).